Reading from the N-terminus, the 417-residue chain is Serine hydroxymethyltransferase (417 aa).

(6S)-5,6,7,8-tetrahydrofolate is bound by residues leucine 121 and 125-127 (GHL). Position 229 is an N6-(pyridoxal phosphate)lysine (lysine 229). A (6S)-5,6,7,8-tetrahydrofolate-binding site is contributed by 355-357 (SPF).

The protein belongs to the SHMT family. As to quaternary structure, homodimer. Requires pyridoxal 5'-phosphate as cofactor.

It localises to the cytoplasm. It carries out the reaction (6R)-5,10-methylene-5,6,7,8-tetrahydrofolate + glycine + H2O = (6S)-5,6,7,8-tetrahydrofolate + L-serine. Its pathway is one-carbon metabolism; tetrahydrofolate interconversion. It participates in amino-acid biosynthesis; glycine biosynthesis; glycine from L-serine: step 1/1. Functionally, catalyzes the reversible interconversion of serine and glycine with tetrahydrofolate (THF) serving as the one-carbon carrier. This reaction serves as the major source of one-carbon groups required for the biosynthesis of purines, thymidylate, methionine, and other important biomolecules. Also exhibits THF-independent aldolase activity toward beta-hydroxyamino acids, producing glycine and aldehydes, via a retro-aldol mechanism. This is Serine hydroxymethyltransferase from Aeromonas hydrophila subsp. hydrophila (strain ATCC 7966 / DSM 30187 / BCRC 13018 / CCUG 14551 / JCM 1027 / KCTC 2358 / NCIMB 9240 / NCTC 8049).